Reading from the N-terminus, the 513-residue chain is Light-independent protochlorophyllide reductase subunit B (513 aa).

Asp-36 serves as a coordination point for [4Fe-4S] cluster. The active-site Proton donor is the Asp-299. 434-435 (GM) serves as a coordination point for substrate.

It belongs to the ChlB/BchB/BchZ family. In terms of assembly, protochlorophyllide reductase is composed of three subunits; ChlL, ChlN and ChlB. Forms a heterotetramer of two ChlB and two ChlN subunits. [4Fe-4S] cluster serves as cofactor.

The protein resides in the plastid. It is found in the chloroplast. It carries out the reaction chlorophyllide a + oxidized 2[4Fe-4S]-[ferredoxin] + 2 ADP + 2 phosphate = protochlorophyllide a + reduced 2[4Fe-4S]-[ferredoxin] + 2 ATP + 2 H2O. Its pathway is porphyrin-containing compound metabolism; chlorophyll biosynthesis (light-independent). In terms of biological role, component of the dark-operative protochlorophyllide reductase (DPOR) that uses Mg-ATP and reduced ferredoxin to reduce ring D of protochlorophyllide (Pchlide) to form chlorophyllide a (Chlide). This reaction is light-independent. The NB-protein (ChlN-ChlB) is the catalytic component of the complex. The polypeptide is Light-independent protochlorophyllide reductase subunit B (Cycas taitungensis (Prince sago)).